Reading from the N-terminus, the 565-residue chain is Probable peptidoglycan D,D-transpeptidase PbpC (565 aa).

The helical transmembrane segment at 10-30 threads the bilayer; that stretch reads FILVVTLFVLASLAVSGRLVY. Serine 289 (acyl-ester intermediate) is an active-site residue.

The protein belongs to the transpeptidase family. FtsI subfamily.

It localises to the cell inner membrane. It catalyses the reaction Preferential cleavage: (Ac)2-L-Lys-D-Ala-|-D-Ala. Also transpeptidation of peptidyl-alanyl moieties that are N-acyl substituents of D-alanine.. It participates in cell wall biogenesis; peptidoglycan biosynthesis. Its function is as follows. Catalyzes cross-linking of the peptidoglycan cell wall at the division septum. Binds penicillin. The protein is Probable peptidoglycan D,D-transpeptidase PbpC of Pseudomonas aeruginosa (strain ATCC 15692 / DSM 22644 / CIP 104116 / JCM 14847 / LMG 12228 / 1C / PRS 101 / PAO1).